The primary structure comprises 123 residues: uncharacterized protein (123 aa).

Positions 17–117 (LNNNAFLVDV…NNQDKGWKQN (101 aa)) constitute a Rhodanese domain.

This is an uncharacterized protein from Rickettsia prowazekii (strain Madrid E).